The chain runs to 512 residues: Proline--tRNA ligase (512 aa).

Acidic residues predominate over residues 460–470 (SDEDDEQDTTD). Residues 460–484 (SDEDDEQDTTDENMGVNNDTTVESN) are disordered.

It belongs to the class-II aminoacyl-tRNA synthetase family. ProS type 3 subfamily. As to quaternary structure, homodimer.

The protein localises to the cytoplasm. It catalyses the reaction tRNA(Pro) + L-proline + ATP = L-prolyl-tRNA(Pro) + AMP + diphosphate. Its function is as follows. Catalyzes the attachment of proline to tRNA(Pro) in a two-step reaction: proline is first activated by ATP to form Pro-AMP and then transferred to the acceptor end of tRNA(Pro). This Haloquadratum walsbyi (strain DSM 16790 / HBSQ001) protein is Proline--tRNA ligase.